We begin with the raw amino-acid sequence, 450 residues long: Signal recognition particle 54 kDa protein (450 aa).

Residues 107 to 114 (GIQGSGKT), 188 to 192 (DTAGR), and 247 to 250 (TKLD) each bind GTP.

This sequence belongs to the GTP-binding SRP family. SRP54 subfamily. In terms of assembly, part of the signal recognition particle protein translocation system, which is composed of SRP and FtsY. Archaeal SRP consists of a 7S RNA molecule of 300 nucleotides and two protein subunits: SRP54 and SRP19.

The protein localises to the cytoplasm. It carries out the reaction GTP + H2O = GDP + phosphate + H(+). Functionally, involved in targeting and insertion of nascent membrane proteins into the cytoplasmic membrane. Binds to the hydrophobic signal sequence of the ribosome-nascent chain (RNC) as it emerges from the ribosomes. The SRP-RNC complex is then targeted to the cytoplasmic membrane where it interacts with the SRP receptor FtsY. The protein is Signal recognition particle 54 kDa protein of Methanococcus maripaludis (strain C5 / ATCC BAA-1333).